We begin with the raw amino-acid sequence, 188 residues long: UPF0301 protein PsycPRwf_0144 (188 aa).

It belongs to the UPF0301 (AlgH) family.

The protein is UPF0301 protein PsycPRwf_0144 of Psychrobacter sp. (strain PRwf-1).